A 180-amino-acid polypeptide reads, in one-letter code: Large ribosomal subunit protein uL5 (180 aa).

Belongs to the universal ribosomal protein uL5 family. In terms of assembly, part of the 50S ribosomal subunit; part of the 5S rRNA/L5/L18/L25 subcomplex. Contacts the 5S rRNA and the P site tRNA. Forms a bridge to the 30S subunit in the 70S ribosome.

Functionally, this is one of the proteins that bind and probably mediate the attachment of the 5S RNA into the large ribosomal subunit, where it forms part of the central protuberance. In the 70S ribosome it contacts protein S13 of the 30S subunit (bridge B1b), connecting the 2 subunits; this bridge is implicated in subunit movement. Contacts the P site tRNA; the 5S rRNA and some of its associated proteins might help stabilize positioning of ribosome-bound tRNAs. The chain is Large ribosomal subunit protein uL5 from Chlamydia trachomatis serovar A (strain ATCC VR-571B / DSM 19440 / HAR-13).